We begin with the raw amino-acid sequence, 440 residues long: Glutamate-1-semialdehyde 2,1-aminomutase (440 aa).

Residue Lys273 is modified to N6-(pyridoxal phosphate)lysine.

This sequence belongs to the class-III pyridoxal-phosphate-dependent aminotransferase family. HemL subfamily. In terms of assembly, homodimer. Pyridoxal 5'-phosphate serves as cofactor.

It is found in the cytoplasm. It catalyses the reaction (S)-4-amino-5-oxopentanoate = 5-aminolevulinate. Its pathway is porphyrin-containing compound metabolism; protoporphyrin-IX biosynthesis; 5-aminolevulinate from L-glutamyl-tRNA(Glu): step 2/2. This is Glutamate-1-semialdehyde 2,1-aminomutase from Alkaliphilus metalliredigens (strain QYMF).